We begin with the raw amino-acid sequence, 418 residues long: E3 ubiquitin-protein ligase pellino homolog 1 (418 aa).

Residues 13–200 (APVKYGELIV…MHPRNGFTED (188 aa)) form the FHA; atypical domain. Ser-121 is modified (phosphoserine; by ATM). Thr-127 bears the Phosphothreonine; by ATM mark. The interval 311–399 (CGHVHGYHNW…TFHAACPFCA (89 aa)) is ring-like domain; necessary for ubiqitination of RIPK3.

Belongs to the pellino family. In terms of assembly, interacts with MAP3K7. Upon IL1B treatment, forms a complex with TRAF6, IRAK1, IRAK4 and MYD88; this complex recruits MAP3K7/TAK1, TAB1 and TAB2 to mediate NF-kappa-B activation. Direct binding of SMAD6 to PELI1 prevents the complex formation and hence negatively regulates IL1R-TLR signaling and eventually NF-kappa-B-mediated gene expression. Interacts (via atypical FHA domain) with RIPK3; preferentially binds to the 'Thr-182' phosphorylated form of RIPK3. Interacts with RIPK1 and IRAK1. In terms of processing, phosphorylation by IRAK1 and IRAK4 enhances its E3 ligase activity. Phosphorylated by ATM in response to DNA damage, promoting localization to DNA double-strand breaks (DSBs) and ability to mediate 'Lys-63'-linked ubiquitination of NBN. Sumoylated. Expressed at high levels in normal skin but decreased in keratinocytes from toxic epidermal necrolysis (TEN) patients (at protein level).

It is found in the chromosome. The catalysed reaction is S-ubiquitinyl-[E2 ubiquitin-conjugating enzyme]-L-cysteine + [acceptor protein]-L-lysine = [E2 ubiquitin-conjugating enzyme]-L-cysteine + N(6)-ubiquitinyl-[acceptor protein]-L-lysine.. It participates in protein modification; protein ubiquitination. In terms of biological role, E3 ubiquitin ligase catalyzing the covalent attachment of ubiquitin moieties onto substrate proteins. Involved in the TLR and IL-1 signaling pathways via interaction with the complex containing IRAK kinases and TRAF6. Acts as a positive regulator of inflammatory response in microglia through activation of NF-kappa-B and MAP kinase. Mediates 'Lys-63'-linked polyubiquitination of IRAK1 allowing subsequent NF-kappa-B activation. Conjugates 'Lys-63'-linked ubiquitin chains to the adapter protein ASC/PYCARD, which in turn is crucial for NLRP3 inflammasome activation. Mediates 'Lys-48'-linked polyubiquitination of RIPK3 leading to its subsequent proteasome-dependent degradation; preferentially recognizes and mediates the degradation of the 'Thr-182' phosphorylated form of RIPK3. Negatively regulates necroptosis by reducing RIPK3 expression. Mediates 'Lys-63'-linked ubiquitination of RIPK1. Following phosphorylation by ATM, catalyzes 'Lys-63'-linked ubiquitination of NBN, promoting DNA repair via homologous recombination. Negatively regulates activation of the metabolic mTORC1 signaling pathway by mediating 'Lys-63'-linked ubiquitination of mTORC1-inhibitory protein TSC1 and thereby promoting TSC1/TSC2 complex stability. The protein is E3 ubiquitin-protein ligase pellino homolog 1 of Homo sapiens (Human).